The primary structure comprises 509 residues: Methylmalonyl-CoA decarboxylase subunit alpha (509 aa).

One can recognise a CoA carboxyltransferase N-terminal domain in the interval 4–260 (VQEKIELLHE…NNMEDAPLVD (257 aa)). Positions 267–503 (REDESLNSLL…SKRENRAPKK (237 aa)) constitute a CoA carboxyltransferase C-terminal domain.

This sequence belongs to the AccD/PCCB family. In terms of assembly, the methylmalonyl-CoA decarboxylase is composed of five subunits: the carboxyltransferase alpha subunit (MmdA), the tunnel beta subunit (MmdB), the biotin-containing gamma subunit (MmdC), and the delta (MmdD) and epsilon (MmdE) subunits. Interacts with the gamma subunit.

The protein resides in the cell membrane. The catalysed reaction is (S)-methylmalonyl-CoA + Na(+)(in) + H(+)(out) = propanoyl-CoA + Na(+)(out) + CO2. Completely inhibited by avidin. Functionally, carboxyltransferase subunit of the sodium ion pump methylmalonyl-CoA decarboxylase, which converts the chemical energy of a decarboxylation reaction into an electrochemical gradient of Na(+) ions across the cytoplasmic membrane, thereby creating a sodium ion motive force that is used for ATP synthesis. The alpha subunit catalyzes the Na(+)-independent carboxyltransfer from methylmalonyl-CoA to the prosthetic biotin group located on the gamma subunit. Can also convert malonyl-CoA into acetyl-CoA. The sequence is that of Methylmalonyl-CoA decarboxylase subunit alpha from Veillonella parvula (Staphylococcus parvulus).